The chain runs to 318 residues: Thioredoxin reductase (318 aa).

36–43 contributes to the FAD binding site; that stretch reads TGMQQGGQ. An intrachain disulfide couples Cys136 to Cys139. 286–295 lines the FAD pocket; sequence DVMDHNYRQA.

It belongs to the class-II pyridine nucleotide-disulfide oxidoreductase family. Homodimer. Requires FAD as cofactor.

The protein resides in the cytoplasm. It catalyses the reaction [thioredoxin]-dithiol + NADP(+) = [thioredoxin]-disulfide + NADPH + H(+). The chain is Thioredoxin reductase (trxB) from Vibrio cholerae serotype O1 (strain ATCC 39315 / El Tor Inaba N16961).